A 319-amino-acid chain; its full sequence is Aliphatic sulfonates import ATP-binding protein SsuB 1 (319 aa).

The ABC transporter domain occupies 63 to 282; sequence VTLSGVSKRF…ARASAAFAAL (220 aa). Residue 95 to 102 coordinates ATP; that stretch reads GRSGCGKS.

Belongs to the ABC transporter superfamily. Aliphatic sulfonates importer (TC 3.A.1.17.2) family. As to quaternary structure, the complex is composed of two ATP-binding proteins (SsuB), two transmembrane proteins (SsuC) and a solute-binding protein (SsuA).

The protein resides in the cell inner membrane. It catalyses the reaction ATP + H2O + aliphatic sulfonate-[sulfonate-binding protein]Side 1 = ADP + phosphate + aliphatic sulfonateSide 2 + [sulfonate-binding protein]Side 1.. Part of the ABC transporter complex SsuABC involved in aliphatic sulfonates import. Responsible for energy coupling to the transport system. In Burkholderia cenocepacia (strain HI2424), this protein is Aliphatic sulfonates import ATP-binding protein SsuB 1.